Consider the following 246-residue polypeptide: UPF0736 protein GK0808 (246 aa).

Belongs to the UPF0736 family.

This chain is UPF0736 protein GK0808, found in Geobacillus kaustophilus (strain HTA426).